The primary structure comprises 218 residues: Small ribosomal subunit protein uS3c (218 aa).

Positions 47–118 (VQKNIRISSG…KLNIAITRIT (72 aa)) constitute a KH type-2 domain.

This sequence belongs to the universal ribosomal protein uS3 family. Part of the 30S ribosomal subunit.

The protein localises to the plastid. It is found in the chloroplast. The polypeptide is Small ribosomal subunit protein uS3c (rps3) (Vitis vinifera (Grape)).